Reading from the N-terminus, the 289-residue chain is Bidirectional sugar transporter SWEET15 (289 aa).

Over 1–10 (MAMAMANHHT) the chain is Extracellular. The chain crosses the membrane as a helical span at residues 11-31 (LGLIFGILGNIISFLVYFAPA). The MtN3/slv 1 domain occupies 14-100 (IFGILGNIIS…LYFFYAPMQA (87 aa)). Over 32 to 45 (PTFYRIYKRKSAEG) the chain is Cytoplasmic. A helical transmembrane segment spans residues 46 to 66 (FHSLPYIVALFSAMLWLYYAL). Topologically, residues 67-70 (LKKD) are extracellular. Residues 71 to 91 (AFLLITINSFGCAIESFYILL) form a helical membrane-spanning segment. The Cytoplasmic segment spans residues 92 to 106 (YFFYAPMQAKKQTLK). A helical transmembrane segment spans residues 107–127 (VVISLNVGVFSILVVLIQFLL). Topologically, residues 128–134 (KGSNRIN) are extracellular. Residues 135–155 (VFGWICASFSVAVFAAPLSIV) traverse the membrane as a helical segment. The MtN3/slv 2 domain occupies 136-219 (FGWICASFSV…VLYGFYRNAG (84 aa)). Residues 156–167 (AKVIRTKSVEFM) lie on the Cytoplasmic side of the membrane. A helical membrane pass occupies residues 168 to 188 (PFSLSFFLTLSAIMWFAYGLL). The Extracellular segment spans residues 189–193 (KNDPC). A helical transmembrane segment spans residues 194–214 (VAIPNILGVILGLVQMVLYGF). At 215–289 (YRNAGKEKME…GELQPNGSTV (75 aa)) the chain is on the cytoplasmic side. The interval 249-289 (GAQQNGIKKSGSEDVKDDEETGNREKSTENSGELQPNGSTV) is disordered. Positions 277–289 (ENSGELQPNGSTV) are enriched in polar residues.

It belongs to the SWEET sugar transporter family. Forms homooligomers and/or heterooligomers.

Its subcellular location is the cell membrane. Its function is as follows. Mediates both low-affinity uptake and efflux of sugar across the plasma membrane. The chain is Bidirectional sugar transporter SWEET15 from Vitis vinifera (Grape).